Reading from the N-terminus, the 570-residue chain is Frizzled-2 (570 aa).

The signal sequence occupies residues 1–28 (MRARSALPRSALPRLLLPLLLLPAAGPA). Topologically, residues 29 to 252 (QFHGEKGISI…HHHTRFARLW (224 aa)) are extracellular. The 120-residue stretch at 39–158 (PDHGFCQPIS…HGAEQICVGQ (120 aa)) folds into the FZ domain. Intrachain disulfides connect Cys-44–Cys-105, Cys-52–Cys-98, Cys-89–Cys-126, Cys-115–Cys-155, and Cys-119–Cys-143. N-linked (GlcNAc...) asparagine glycosylation occurs at Asn-58. Residue Asn-159 is glycosylated (N-linked (GlcNAc...) asparagine). The disordered stretch occupies residues 166-194 (PALLTTAPPSGLQPGAGGTPGGPGGGGAP). Gly residues predominate over residues 179 to 193 (PGAGGTPGGPGGGGA). The chain crosses the membrane as a helical span at residues 253-273 (ILTWSVLCCASTFFTVTTSLV). Topologically, residues 274–284 (AMQRFRYPERP) are cytoplasmic. The helical transmembrane segment at 285–305 (IIFLSGCYTMVSVAYIAGFVL) threads the bilayer. Over 306–332 (QERVVCNERFSEDGYRTVGQGTKKEGC) the chain is Extracellular. Residues 333-353 (TILFMMLYFFSMASSIWWVIL) traverse the membrane as a helical segment. Residues 354–375 (SLTWFLAAGMKWGHAAIEANSQ) lie on the Cytoplasmic side of the membrane. The helical transmembrane segment at 376–396 (YFHLAAWAVPAVKTITILAMG) threads the bilayer. Over 397-419 (QIDGDLLSGVCFVGLNRLDPLRG) the chain is Extracellular. Residues 420-440 (FVLAPLFVYLFIGTSFLLAGF) traverse the membrane as a helical segment. Residues 441–466 (VSLFRIRTIMKHDGTKTEPLERLMVR) lie on the Cytoplasmic side of the membrane. The chain crosses the membrane as a helical span at residues 467–487 (IGVFSVLYTVPATIVIACYFY). Residues 488–524 (EQAFREHWERSWVSQHCKSLAIPCPAHYTPRTSPDFT) lie on the Extracellular side of the membrane. A helical transmembrane segment spans residues 525 to 545 (VYMIKYLMTLIVGITSGFWIW). Residues 546-570 (SGKTLHSWRKFYTRLTNSRHGETTV) lie on the Cytoplasmic side of the membrane. Residues 548–553 (KTLHSW) carry the Lys-Thr-X-X-X-Trp motif, mediates interaction with the PDZ domain of Dvl family members motif. Positions 568–570 (TTV) match the PDZ-binding motif.

It belongs to the G-protein coupled receptor Fz/Smo family. Ubiquitinated by ZNRF3, leading to its degradation by the proteasome. As to expression, widely expressed. Most abundant in kidney, liver, uterus, ovary and heart. Lower levels seen in brain and intestine. Extremely low in calvaria, mammary glands and testis.

The protein resides in the membrane. The protein localises to the cell membrane. In terms of biological role, receptor for Wnt proteins. Most of frizzled receptors are coupled to the beta-catenin canonical signaling pathway, which leads to the activation of disheveled proteins, inhibition of GSK-3 kinase, nuclear accumulation of beta-catenin and activation of Wnt target genes. A second signaling pathway involving PKC and calcium fluxes has been seen for some family members, but it is not yet clear if it represents a distinct pathway or if it can be integrated in the canonical pathway, as PKC seems to be required for Wnt-mediated inactivation of GSK-3 kinase. Both pathways seem to involve interactions with G-proteins. May be involved in transduction and intercellular transmission of polarity information during tissue morphogenesis and/or in differentiated tissues. Activation by Wnt5A stimulates PKC activity via a G-protein-dependent mechanism. The protein is Frizzled-2 (Fzd2) of Rattus norvegicus (Rat).